Here is a 487-residue protein sequence, read N- to C-terminus: MGDPGSLVTEGRAGERSWCLRRVGMNTEWLLLEDGNEVTVGRGFGVTYQLVSKICPLMISRNHCILKQNAEGQWTIKDNKSLNGVWLNRERLEPLKVYSIHKGDHIQLGVPLENKENAEYEYEVTEEDWERIYPCLSPKSDQMMEKNKGLRTKRKFSLDELEGSGAEGPSNLKSKISKLSCEPGQQVKSHGKGKVASQPSEYLDPKLTSFEPSVKTTGAHVNPGPAKVIELLRKKKKASNPSASQSSLELFKVTMSRILMLKTQMQEKQVAVLNVKKQTKKGSSKKIVKMEQELQDLQSQLCAEQAQQQARVEQLEKTIQEEQQHLEGLEKEEGEEDLKQQLAQALQEYRSLVEELNRSKKNFEAIIQAKDKELEQTKEEKEKVQAQKEEVLSHMNDVLENELQCIICSEYFVEAVTLNCAHSFCSYCINEWMKRKVECPICRKDIKSKTRSLVLDNCISKMVDNLNSEVKERRIVLIRERKGKRLF.

The FHA domain occupies 38–92 (VTVGRGFGVTYQLVSKICPLMISRNHCILKQNAEGQWTIKDNKSLNGVWLNRERL). A required for interaction with PIWIL1 region spans residues 68–72 (QNAEG). 2 disordered regions span residues 143-176 (MMEK…KSKI) and 182-201 (EPGQ…QPSE). Phosphoserine is present on Ser-157. The RING-type zinc-finger motif lies at 405–443 (CIICSEYFVEAVTLNCAHSFCSYCINEWMKRKVECPICR).

The protein belongs to the RNF8 family. As to quaternary structure, homodimer. Forms a E2-E3 ubiquitin ligase complex composed of the RNF8 homodimer and a E2 heterodimer of UBE2N and UBE2V2. Interacts with class III E2s, including UBE2E1, UBE2E2, and UBE2E3 and with UBE2N. Interacts with RXRA. Interacts (via FHA domain) with phosphorylated HERC2 (via C-terminus). Interacts with PIWIL1; leading to sequester RNF8 in the cytoplasm. Interacts with WRAP53/TCAB1. In terms of processing, autoubiquitinated through 'Lys-48' and 'Lys-63' of ubiquitin. 'Lys-63' polyubiquitination is mediated by UBE2N. 'Lys-29'-type polyubiquitination is also observed, but it doesn't require its own functional RING-type zinc finger.

The protein localises to the nucleus. It is found in the cytoplasm. It localises to the midbody. The protein resides in the chromosome. Its subcellular location is the telomere. The enzyme catalyses S-ubiquitinyl-[E2 ubiquitin-conjugating enzyme]-L-cysteine + [acceptor protein]-L-lysine = [E2 ubiquitin-conjugating enzyme]-L-cysteine + N(6)-ubiquitinyl-[acceptor protein]-L-lysine.. The protein operates within protein modification; protein ubiquitination. E3 ubiquitin-protein ligase that plays a key role in DNA damage signaling via 2 distinct roles: by mediating the 'Lys-63'-linked ubiquitination of histones H2A and H2AX and promoting the recruitment of DNA repair proteins at double-strand breaks (DSBs) sites, and by catalyzing 'Lys-48'-linked ubiquitination to remove target proteins from DNA damage sites. Following DNA DSBs, it is recruited to the sites of damage by ATM-phosphorylated MDC1 and catalyzes the 'Lys-63'-linked ubiquitination of histones H2A and H2AX, thereby promoting the formation of TP53BP1 and BRCA1 ionizing radiation-induced foci (IRIF). Also controls the recruitment of UIMC1-BRCC3 (RAP80-BRCC36) and PAXIP1/PTIP to DNA damage sites. Promotes the recruitment of NBN to DNA damage sites by catalyzing 'Lys-6'-linked ubiquitination of NBN. Also recruited at DNA interstrand cross-links (ICLs) sites and catalyzes 'Lys-63'-linked ubiquitination of histones H2A and H2AX, leading to recruitment of FAAP20 and Fanconi anemia (FA) complex, followed by interstrand cross-link repair. H2A ubiquitination also mediates the ATM-dependent transcriptional silencing at regions flanking DSBs in cis, a mechanism to avoid collision between transcription and repair intermediates. Promotes the formation of 'Lys-63'-linked polyubiquitin chains via interactions with the specific ubiquitin-conjugating UBE2N/UBC13 and ubiquitinates non-histone substrates such as PCNA. Substrates that are polyubiquitinated at 'Lys-63' are usually not targeted for degradation. Also catalyzes the formation of 'Lys-48'-linked polyubiquitin chains via interaction with the ubiquitin-conjugating UBE2L6/UBCH8, leading to degradation of substrate proteins such as CHEK2, JMJD2A/KDM4A and KU80/XRCC5: it is still unclear how the preference toward 'Lys-48'- versus 'Lys-63'-linked ubiquitination is regulated but it could be due to RNF8 ability to interact with specific E2 specific ligases. For instance, interaction with phosphorylated HERC2 promotes the association between RNF8 and UBE2N/UBC13 and favors the specific formation of 'Lys-63'-linked ubiquitin chains. Promotes non-homologous end joining (NHEJ) by promoting the 'Lys-48'-linked ubiquitination and degradation the of KU80/XRCC5. Following DNA damage, mediates the ubiquitination and degradation of JMJD2A/KDM4A in collaboration with RNF168, leading to unmask H4K20me2 mark and promote the recruitment of TP53BP1 at DNA damage sites. Following DNA damage, mediates the ubiquitination and degradation of POLD4/p12, a subunit of DNA polymerase delta. In the absence of POLD4, DNA polymerase delta complex exhibits higher proofreading activity. In addition to its function in damage signaling, also plays a role in higher-order chromatin structure by mediating extensive chromatin decondensation. Involved in the activation of ATM by promoting histone H2B ubiquitination, which indirectly triggers histone H4 'Lys-16' acetylation (H4K16ac), establishing a chromatin environment that promotes efficient activation of ATM kinase. Required in the testis, where it plays a role in the replacement of histones during spermatogenesis. At uncapped telomeres, promotes the joining of deprotected chromosome ends by inducing H2A ubiquitination and TP53BP1 recruitment, suggesting that it may enhance cancer development by aggravating telomere-induced genome instability in case of telomeric crisis. Promotes the assembly of RAD51 at DNA DSBs in the absence of BRCA1 and TP53BP1 Also involved in class switch recombination in immune system, via its role in regulation of DSBs repair. May be required for proper exit from mitosis after spindle checkpoint activation and may regulate cytokinesis. May play a role in the regulation of RXRA-mediated transcriptional activity. Not involved in RXRA ubiquitination by UBE2E2. The chain is E3 ubiquitin-protein ligase RNF8 from Bos taurus (Bovine).